The following is a 188-amino-acid chain: MVSSKDKIKEELKQEEPEENVEIANTETQKIEMVEEAKSDEFVLPFQRENLKNYLWRLLIIKKVEIRDVILKNSNEPAQVSYIDGYVIDNNELEQRLIKEIVNNQTIPINLLKEVNNHKKEVYLFSTSQGVYYSLLRSVVPKLKNGAVIVGIALQQSDYPQPMVTLVHPSRLEELKTQYEALSKTKKG.

A compositionally biased stretch (basic and acidic residues) spans 1-15; that stretch reads MVSSKDKIKEELKQE. Positions 1 to 21 are disordered; the sequence is MVSSKDKIKEELKQEEPEENV.

This is an uncharacterized protein from Saccharolobus islandicus (Sulfolobus islandicus).